A 255-amino-acid polypeptide reads, in one-letter code: Gene 54 protein (255 aa).

In Mycobacterium (Mycobacteriophage L5), this protein is Gene 54 protein (54).